The sequence spans 483 residues: UDP-N-acetylmuramoylalanine--D-glutamate ligase (483 aa).

ATP is bound at residue 119-125 (GTNGKTT).

This sequence belongs to the MurCDEF family.

The protein localises to the cytoplasm. It catalyses the reaction UDP-N-acetyl-alpha-D-muramoyl-L-alanine + D-glutamate + ATP = UDP-N-acetyl-alpha-D-muramoyl-L-alanyl-D-glutamate + ADP + phosphate + H(+). It functions in the pathway cell wall biogenesis; peptidoglycan biosynthesis. Cell wall formation. Catalyzes the addition of glutamate to the nucleotide precursor UDP-N-acetylmuramoyl-L-alanine (UMA). The chain is UDP-N-acetylmuramoylalanine--D-glutamate ligase from Mycolicibacterium vanbaalenii (strain DSM 7251 / JCM 13017 / BCRC 16820 / KCTC 9966 / NRRL B-24157 / PYR-1) (Mycobacterium vanbaalenii).